Consider the following 191-residue polypeptide: Akirin-1 (191 aa).

The disordered stretch occupies residues Leu-17 to Pro-70. The residue at position 22 (Ser-22) is a Phosphoserine. Residues Pro-23–Cys-28 carry the Nuclear localization signal motif. The span at Leu-31–Leu-48 shows a compositional bias: pro residues. The segment covering Gln-49–Gln-59 has biased composition (polar residues). Thr-71 is subject to Phosphothreonine. An SYVS motif motif is present at residues Ser-188–Ser-191.

It belongs to the akirin family. Expressed in macrophages and satellite cells.

The protein resides in the nucleus. In terms of biological role, molecular adapter that acts as a bridge between proteins, and which is involved skeletal muscle development. Functions as a signal transducer for MSTN during skeletal muscle regeneration and myogenesis. May regulate chemotaxis of both macrophages and myoblasts by reorganising actin cytoskeleton, leading to more efficient lamellipodia formation via a PI3 kinase dependent pathway. In contrast to AKIRIN2, not involved in nuclear import of proteasomes. This Mus musculus (Mouse) protein is Akirin-1.